Consider the following 433-residue polypeptide: Histidine--tRNA ligase (433 aa).

It belongs to the class-II aminoacyl-tRNA synthetase family. Homodimer.

It is found in the cytoplasm. It catalyses the reaction tRNA(His) + L-histidine + ATP = L-histidyl-tRNA(His) + AMP + diphosphate + H(+). In Pseudothermotoga lettingae (strain ATCC BAA-301 / DSM 14385 / NBRC 107922 / TMO) (Thermotoga lettingae), this protein is Histidine--tRNA ligase.